We begin with the raw amino-acid sequence, 416 residues long: Transcription factor LATE FLOWERING (416 aa).

Composition is skewed to low complexity over residues 176 to 186 and 200 to 212; these read STTTTTTALPP and TSPTTKTTTTSET. Disordered regions lie at residues 176 to 226 and 276 to 311; these read STTT…AGGS and LGGPASASDPSSRPPPPPQRPRRKNVRISSDPQTVA. Residues 303–316 are basic motif; degenerate; sequence ISSDPQTVAARLRR. Residues 303-352 enclose the bHLH domain; that stretch reads ISSDPQTVAARLRRERVSERLRVLQRLVPGGSKMDTATMLDEAASYLKFL. Residues 317–352 are helix-loop-helix motif; it reads ERVSERLRVLQRLVPGGSKMDTATMLDEAASYLKFL.

This sequence belongs to the bHLH protein family. Interacts with PIL13 and PIL15.

The protein resides in the nucleus. In terms of biological role, transcription factor involved in the negative regulation of flowering. May be involved in the repression of the flowering factor GI and HD1 by interacting with PIL13 and PIL15 and competing with PRR1. Possesses transactivation activity in yeast. The chain is Transcription factor LATE FLOWERING from Oryza sativa subsp. japonica (Rice).